A 65-amino-acid chain; its full sequence is Toxin Co52 (65 aa).

The region spanning 2 to 65 (EDGYLVDKTG…PTWPLPNKTC (64 aa)) is the LCN-type CS-alpha/beta domain. Cystine bridges form between C12-C65, C16-C41, C25-C46, and C29-C48.

In terms of tissue distribution, expressed by the venom gland.

Its subcellular location is the secreted. In terms of biological role, beta toxins bind voltage-independently at site-4 of sodium channels (Nav) and shift the voltage of activation toward more negative potentials thereby affecting sodium channel activation and promoting spontaneous and repetitive firing. Not toxic to mice, chicks, crickets or woodlice (at 5 ug). The protein is Toxin Co52 of Centruroides ornatus (Scorpion).